Here is a 65-residue protein sequence, read N- to C-terminus: Large ribosomal subunit protein bL35 (65 aa).

Positions 1-22 (MPKLKTKSGAAKRFKKTGKGGF) are disordered.

The protein belongs to the bacterial ribosomal protein bL35 family.

In Francisella philomiragia subsp. philomiragia (strain ATCC 25017 / CCUG 19701 / FSC 153 / O#319-036), this protein is Large ribosomal subunit protein bL35.